Consider the following 421-residue polypeptide: UDP-N-acetylglucosamine 1-carboxyvinyltransferase (421 aa).

22-23 (KN) serves as a coordination point for phosphoenolpyruvate. Arg92 contacts UDP-N-acetyl-alpha-D-glucosamine. The active-site Proton donor is the Cys116. Residue Cys116 is modified to 2-(S-cysteinyl)pyruvic acid O-phosphothioketal. Residues 121 to 125 (RPVDQ), Asp304, and Ile326 contribute to the UDP-N-acetyl-alpha-D-glucosamine site.

It belongs to the EPSP synthase family. MurA subfamily.

It localises to the cytoplasm. The enzyme catalyses phosphoenolpyruvate + UDP-N-acetyl-alpha-D-glucosamine = UDP-N-acetyl-3-O-(1-carboxyvinyl)-alpha-D-glucosamine + phosphate. It participates in cell wall biogenesis; peptidoglycan biosynthesis. Its function is as follows. Cell wall formation. Adds enolpyruvyl to UDP-N-acetylglucosamine. The protein is UDP-N-acetylglucosamine 1-carboxyvinyltransferase of Bordetella avium (strain 197N).